A 424-amino-acid chain; its full sequence is Trigger factor (424 aa).

A PPIase FKBP-type domain is found at 163–248 (GNTVVLDFEG…IHEIKAKELP (86 aa)).

The protein belongs to the FKBP-type PPIase family. Tig subfamily.

The protein resides in the cytoplasm. The catalysed reaction is [protein]-peptidylproline (omega=180) = [protein]-peptidylproline (omega=0). Functionally, involved in protein export. Acts as a chaperone by maintaining the newly synthesized protein in an open conformation. Functions as a peptidyl-prolyl cis-trans isomerase. The protein is Trigger factor (tig) of Bacillus subtilis (strain 168).